Consider the following 397-residue polypeptide: Odorant receptor 2a (397 aa).

Residues 1-38 (MEKQEDFKLNTHSAVYYHWRVWELTGLMRPPGVSSLLY) lie on the Cytoplasmic side of the membrane. A helical membrane pass occupies residues 39–59 (VVYSITVNLVVTVLFPLSLLA). The Extracellular segment spans residues 60–72 (RLLFTTNMAGLCE). The chain crosses the membrane as a helical span at residues 73 to 92 (NLTITITDIVANLKFANVYM). Residues 93–131 (VRKQLHEIRSLLRLMDARARLVGDPEEISALRKEVNIAQ) lie on the Cytoplasmic side of the membrane. Residues 132–150 (GTFRTFASIFVFGTTLSCV) traverse the membrane as a helical segment. Residues 151 to 176 (RVVVRPDRELLYPAWFGVDWMHSTRN) are Extracellular-facing. A helical transmembrane segment spans residues 177 to 197 (YVLINIYQLFGLIVQAIQNCA). Residues 198–272 (SDSYPPAFLC…IIQRVLSVPC (75 aa)) lie on the Cytoplasmic side of the membrane. A helical membrane pass occupies residues 273–293 (MAQFVCSAAVQCTVAMHFLYV). Residues 294–301 (ADDHDHTA) lie on the Extracellular side of the membrane. Residues 302 to 322 (MIISIVFFSAVTLEVFVICYF) form a helical membrane-spanning segment. Over 323–363 (GDRMRTQSEALCDAFYDCNWIEQLPKFKRELLFTLARTQRP) the chain is Cytoplasmic. Residues 364–383 (SLIYAGNYIALSLETFEQVM) traverse the membrane as a helical segment. Residues 384 to 397 (RFTYSVFTLLLRAK) are Extracellular-facing.

The protein belongs to the insect chemoreceptor superfamily. Heteromeric odorant receptor channel (TC 1.A.69) family. Or2a subfamily. Interacts with Orco. Complexes exist early in the endomembrane system in olfactory sensory neurons (OSNs), coupling these complexes to the conserved ciliary trafficking pathway. As to expression, expressed in 20 sensory neurons on the distal edge of the antenna.

The protein localises to the cell membrane. Its function is as follows. Odorant receptor which mediates acceptance or avoidance behavior, depending on its substrates. The odorant receptor repertoire encodes a large collection of odor stimuli that vary widely in identity, intensity, and duration. May form a complex with Orco to form odorant-sensing units, providing sensitive and prolonged odorant signaling and calcium permeability. The polypeptide is Odorant receptor 2a (Or2a) (Drosophila melanogaster (Fruit fly)).